The following is a 618-amino-acid chain: Uptake hydrogenase large subunit (618 aa).

Ni(2+) is bound by residues Cys75, Cys78, Cys597, and Cys600.

Belongs to the [NiFe]/[NiFeSe] hydrogenase large subunit family. Heterodimer of a large and a small subunit. Requires Ni(2+) as cofactor.

It localises to the cell membrane. The enzyme catalyses H2 + A = AH2. Functionally, this enzyme recycles the H(2) produced by nitrogenase to increase the production of ATP and to protect nitrogenase against inhibition or damage by O(2) under carbon- or phosphate-limited conditions. The protein is Uptake hydrogenase large subunit (hoxG) of Cupriavidus necator (strain ATCC 17699 / DSM 428 / KCTC 22496 / NCIMB 10442 / H16 / Stanier 337) (Ralstonia eutropha).